We begin with the raw amino-acid sequence, 217 residues long: Elongation factor Ts (217 aa).

Residues 82–85 (TDFV) form an involved in Mg(2+) ion dislocation from EF-Tu region.

Belongs to the EF-Ts family.

It localises to the cytoplasm. Functionally, associates with the EF-Tu.GDP complex and induces the exchange of GDP to GTP. It remains bound to the aminoacyl-tRNA.EF-Tu.GTP complex up to the GTP hydrolysis stage on the ribosome. This chain is Elongation factor Ts, found in Desulforamulus reducens (strain ATCC BAA-1160 / DSM 100696 / MI-1) (Desulfotomaculum reducens).